A 980-amino-acid chain; its full sequence is Glutamate receptor ionotropic, kainate 5 (980 aa).

The first 14 residues, 1 to 14, serve as a signal peptide directing secretion; that stretch reads MPAELLLLLIVAFA. The Extracellular segment spans residues 15–544; it reads SPSCQVLSSL…YFSFLDPFSP (530 aa). 3 disulfides stabilise this stretch: Cys36–Cys292, Cys83–Cys334, and Cys165–Cys170. N-linked (GlcNAc...) asparagine glycans are attached at residues Asn219, Asn271, Asn285, Asn322, Asn372, Asn394, Asn400, Asn407, Asn414, and Asn478. A helical transmembrane segment spans residues 545-565; that stretch reads AVWLFMLLAYLAVSCVLFLAA. Topologically, residues 566-622 are cytoplasmic; the sequence is RLSPYEWYNPHPCLRARPHILENQYTLGNSLWFPVGGFMQQGSEIMPRALSTRCVSG. Residues 623–643 traverse the membrane as a helical segment; the sequence is VWWAFTLIIISSYTANLAAFL. The Extracellular portion of the chain corresponds to 644–803; it reads TVQRMEVPVE…HRAKGLGMEN (160 aa). A glycan (N-linked (GlcNAc...) asparagine) is linked at Asn735. The chain crosses the membrane as a helical span at residues 804-824; the sequence is IGGIFIVLICGLIIAVFVAVM. Over 825-980 the chain is Cytoplasmic; it reads EFIWSTRRSA…AGPRELAEHE (156 aa). Disordered regions lie at residues 891-927 and 944-980; these read YSAGAGGDAGSAHGGPQRLLDDPGPPSGARPAAPTPC and ASGAGAPPRGLGVPAEATSPPRPRPGPAGPRELAEHE. Residues 894-903 show a composition bias toward gly residues; sequence GAGGDAGSAH.

Belongs to the glutamate-gated ion channel (TC 1.A.10.1) family. GRIK5 subfamily. In terms of assembly, homotetramer. Heterotetramer with GRIK2. Can form functional heteromeric receptors with GRIK1 and GRIK2. Can form functional heteromeric receptors with GRIK3.

Its subcellular location is the cell membrane. The protein localises to the postsynaptic cell membrane. It localises to the presynaptic cell membrane. Functionally, ionotropic glutamate receptor that functions as a cation-permeable ligand-gated ion channel, gated by L-glutamate and the glutamatergic agonist kainic acid. Cannot form functional channels on its own and produces channel activity only in heteromeric assembly with GRIK1 and GRIK2 subunits. Can form functional heteromeric receptors with GRIK3. This is Glutamate receptor ionotropic, kainate 5 (GRIK5) from Homo sapiens (Human).